We begin with the raw amino-acid sequence, 335 residues long: (+)-caryolan-1-ol synthase (335 aa).

Mg(2+) contacts are provided by Asp-83, Asp-87, Asn-220, Ser-224, and Glu-228. A DDXXD motif motif is present at residues 83–87 (DDEFD). The NSE/DTE motif motif lies at 220–228 (NDICSFEKE).

The protein belongs to the terpene synthase family. It depends on Mg(2+) as a cofactor. The cofactor is Mn(2+).

The enzyme catalyses (2E,6E)-farnesyl diphosphate = (+)-(E)-beta-caryophyllene + diphosphate. It catalyses the reaction (+)-(E)-beta-caryophyllene + H2O = (+)-caryolan-1-ol. Its pathway is secondary metabolite biosynthesis; terpenoid biosynthesis. In terms of biological role, sesquiterpene cyclase that first catalyzes the cyclization of farnesyl diphosphate (FPP) to the bicyclic sesquiterpene (+)-beta-caryophyllene intermediate, and then its conversion to (+)-caryolan-1-ol via a second cyclization and the addition of a water molecule. The protein is (+)-caryolan-1-ol synthase (gcoA) of Streptomyces griseus subsp. griseus (strain JCM 4626 / CBS 651.72 / NBRC 13350 / KCC S-0626 / ISP 5235).